The primary structure comprises 406 residues: Olfactomedin-like protein 3 (406 aa).

An N-terminal signal peptide occupies residues 1–21 (MGPSAPLLLFFLLSWPGSLQG). Positions 22–101 (QQHHLVEYME…REVDYLETQN (80 aa)) form a coiled coil. The Olfactomedin-like domain maps to 134–401 (DCSYTISQVR…QIVYKLEMKK (268 aa)). The cysteines at positions 135 and 328 are disulfide-linked. A glycan (N-linked (GlcNAc...) asparagine) is linked at asparagine 248.

The protein belongs to the OLFML3 family.

The protein localises to the secreted. Functionally, secreted scaffold protein that plays an essential role in dorsoventral patterning during early development. Stabilizes axial formation by restricting chordin (CHRD) activity on the dorsal side. Acts by facilitating the association between the tolloid proteases and their substrate chordin (CHRD), leading to enhance chordin (CHRD) degradation. May have matrix-related function involved in placental and embryonic development, or play a similar role in other physiological processes. This is Olfactomedin-like protein 3 (Olfml3) from Rattus norvegicus (Rat).